Here is a 173-residue protein sequence, read N- to C-terminus: Nascent polypeptide-associated complex subunit alpha (173 aa).

The region spanning 21-85 (VVHAEKAQKL…VTVEDMAAQA (65 aa)) is the NAC-A/B domain. Residues 89-117 (NESQKQATETKEEAAITEESGDAQPADTA) are disordered. Residue Ser122 is modified to Phosphoserine. Residues 134 to 171 (VDAKDIELVMAQANVSRAKAVTALKENNSDVVNAIMSL) enclose the UBA domain.

Belongs to the NAC-alpha family. As to quaternary structure, part of the nascent polypeptide-associated complex (NAC), consisting of ucp15 and btf3. NAC associates with ribosomes via btf3.

It localises to the cytoplasm. The protein resides in the nucleus. In terms of biological role, component of the nascent polypeptide-associated complex (NAC), a dynamic component of the ribosomal exit tunnel, protecting the emerging polypeptides from interaction with other cytoplasmic proteins to ensure appropriate nascent protein targeting. The NAC complex also promotes mitochondrial protein import by enhancing productive ribosome interactions with the outer mitochondrial membrane and blocks the inappropriate interaction of ribosomes translating non-secretory nascent polypeptides with translocation sites in the membrane of the endoplasmic reticulum. Ucp15 may also be involved in transcription regulation. This is Nascent polypeptide-associated complex subunit alpha (egd2) from Schizosaccharomyces pombe (strain 972 / ATCC 24843) (Fission yeast).